A 535-amino-acid chain; its full sequence is Putative subtilisin-like proteinase 2 (535 aa).

A signal peptide spans 1–17 (MFFVGVAVLAALQSVWG). Positions 221 to 475 (NWIFRVLQIK…IPRLGCKGRI (255 aa)) constitute a Peptidase S8 domain. Catalysis depends on charge relay system residues D255 and H277. C369 and C400 form a disulfide bridge. The active-site Charge relay system is the S420. A helical transmembrane segment spans residues 489-509 (IVPLVFVVLITSALLYLLLIG).

Belongs to the peptidase S8 family.

The protein resides in the membrane. Its function is as follows. May be involved in the degradation of proteins for nutrient acquisition or possess a regulatory function by proteolytic activation of proproteins. This chain is Putative subtilisin-like proteinase 2 (SPL2), found in Encephalitozoon cuniculi (strain GB-M1) (Microsporidian parasite).